The sequence spans 209 residues: Kynurenine formamidase (209 aa).

F18 provides a ligand contact to substrate. The Zn(2+) site is built by H48, H52, and D54. H58 serves as the catalytic Proton donor/acceptor. Zn(2+)-binding residues include H160 and E172.

The protein belongs to the Cyclase 1 superfamily. KynB family. Homodimer. The cofactor is Zn(2+).

It carries out the reaction N-formyl-L-kynurenine + H2O = L-kynurenine + formate + H(+). Its pathway is amino-acid degradation; L-tryptophan degradation via kynurenine pathway; L-kynurenine from L-tryptophan: step 2/2. Catalyzes the hydrolysis of N-formyl-L-kynurenine to L-kynurenine, the second step in the kynurenine pathway of tryptophan degradation. In Bordetella bronchiseptica (strain ATCC BAA-588 / NCTC 13252 / RB50) (Alcaligenes bronchisepticus), this protein is Kynurenine formamidase.